The primary structure comprises 110 residues: MARVKRGVIARARHKKILKQAKGYYGARSRVYRVAFQAVIKAGQYAYRDRRQRKRQFRQLWIARINAAARQNGISYSKFINGLKKASVEIDRKILADIAVFDKVAFHHSG.

It belongs to the bacterial ribosomal protein bL20 family.

Functionally, binds directly to 23S ribosomal RNA and is necessary for the in vitro assembly process of the 50S ribosomal subunit. It is not involved in the protein synthesizing functions of that subunit. This chain is Large ribosomal subunit protein bL20, found in Shigella boydii serotype 4 (strain Sb227).